The primary structure comprises 89 residues: MANIKSAIKRAKTSEKRRAHNASMKSAMRTAIKKFEALVELKDVEKAQEAFIIASKKLDKAASKGLIHKNAASRQKSRLAKKLNSIQAS.

Disordered stretches follow at residues 1-25 (MANIKSAIKRAKTSEKRRAHNASMK) and 69-89 (KNAASRQKSRLAKKLNSIQAS). Residues 7–20 (AIKRAKTSEKRRAH) show a composition bias toward basic residues.

The protein belongs to the bacterial ribosomal protein bS20 family.

Functionally, binds directly to 16S ribosomal RNA. In Geobacillus thermodenitrificans (strain NG80-2), this protein is Small ribosomal subunit protein bS20.